The chain runs to 1417 residues: DNA-directed RNA polymerase subunit beta' (1417 aa).

Cys-68, Cys-70, Cys-83, and Cys-86 together coordinate Zn(2+). Mg(2+) contacts are provided by Asp-458, Asp-460, and Asp-462. The Zn(2+) site is built by Cys-811, Cys-884, Cys-891, and Cys-894.

It belongs to the RNA polymerase beta' chain family. The RNAP catalytic core consists of 2 alpha, 1 beta, 1 beta' and 1 omega subunit. When a sigma factor is associated with the core the holoenzyme is formed, which can initiate transcription. Mg(2+) serves as cofactor. Zn(2+) is required as a cofactor.

It catalyses the reaction RNA(n) + a ribonucleoside 5'-triphosphate = RNA(n+1) + diphosphate. Its function is as follows. DNA-dependent RNA polymerase catalyzes the transcription of DNA into RNA using the four ribonucleoside triphosphates as substrates. This chain is DNA-directed RNA polymerase subunit beta', found in Francisella tularensis subsp. mediasiatica (strain FSC147).